Consider the following 265-residue polypeptide: MSESKSSRQATLRYQMELFLLAVSFFSRLPVPSDLPYSEERMNQAGRYFALVGVILGVLCALVFYFTQLIFPDSVAIVLTMAFSLLLTGAFHEDGLTDMADGIGGGMTVERRLSIMKDSRIGTYGAATLVMALLAKFVLWSELVHLPDFWLVIVVAYTTSRALAATLIYDMPYVSDSDTSKSKPLASKQSSSEVAILLFTAGVASLFLGVIQTSFIVIVLFAFRFAFKRWLTKRIGGFTGDCLGAAQQLSELLVYLTLIAFYQNI.

The next 4 helical transmembrane spans lie at 51–71 (LVGV…QLIF), 72–92 (PDSV…GAFH), 121–140 (IGTY…FVLW), and 203–223 (VASL…LFAF).

It belongs to the CobS family. Requires Mg(2+) as cofactor.

Its subcellular location is the cell inner membrane. The enzyme catalyses alpha-ribazole + adenosylcob(III)inamide-GDP = adenosylcob(III)alamin + GMP + H(+). It catalyses the reaction alpha-ribazole 5'-phosphate + adenosylcob(III)inamide-GDP = adenosylcob(III)alamin 5'-phosphate + GMP + H(+). The protein operates within cofactor biosynthesis; adenosylcobalamin biosynthesis; adenosylcobalamin from cob(II)yrinate a,c-diamide: step 7/7. Functionally, joins adenosylcobinamide-GDP and alpha-ribazole to generate adenosylcobalamin (Ado-cobalamin). Also synthesizes adenosylcobalamin 5'-phosphate from adenosylcobinamide-GDP and alpha-ribazole 5'-phosphate. In Vibrio parahaemolyticus serotype O3:K6 (strain RIMD 2210633), this protein is Adenosylcobinamide-GDP ribazoletransferase.